The primary structure comprises 509 residues: Bifunctional purine biosynthesis protein PurH (509 aa).

In terms of domain architecture, MGS-like spans 1–144; sequence MKRALISVSD…KNYAAVTVVV (144 aa).

Belongs to the PurH family.

The enzyme catalyses (6R)-10-formyltetrahydrofolate + 5-amino-1-(5-phospho-beta-D-ribosyl)imidazole-4-carboxamide = 5-formamido-1-(5-phospho-D-ribosyl)imidazole-4-carboxamide + (6S)-5,6,7,8-tetrahydrofolate. The catalysed reaction is IMP + H2O = 5-formamido-1-(5-phospho-D-ribosyl)imidazole-4-carboxamide. It participates in purine metabolism; IMP biosynthesis via de novo pathway; 5-formamido-1-(5-phospho-D-ribosyl)imidazole-4-carboxamide from 5-amino-1-(5-phospho-D-ribosyl)imidazole-4-carboxamide (10-formyl THF route): step 1/1. The protein operates within purine metabolism; IMP biosynthesis via de novo pathway; IMP from 5-formamido-1-(5-phospho-D-ribosyl)imidazole-4-carboxamide: step 1/1. This is Bifunctional purine biosynthesis protein PurH from Listeria monocytogenes serovar 1/2a (strain ATCC BAA-679 / EGD-e).